The chain runs to 279 residues: 32 kDa beta-galactoside-binding lectin (279 aa).

Galectin domains lie at Y13 to G144 and Y152 to Q279. Position 213 to 219 (W213 to E219) interacts with a beta-D-galactoside.

Post-translationally, the N-terminus is blocked.

Functionally, binds galactose. This is 32 kDa beta-galactoside-binding lectin (lec-1) from Caenorhabditis elegans.